The following is a 43-amino-acid chain: Cytin chain A (43 aa).

This sequence belongs to the protease inhibitor I13 (potato type I serine protease inhibitor) family. As to quaternary structure, heterodimer of an A chain and a B chain, linked by a disulfide bond.

Its function is as follows. Inhibitor of chymotrypsin. This Theromyzon tessulatum (Duck leech) protein is Cytin chain A.